The primary structure comprises 60 residues: Putative insect toxin Acra6 (60 aa).

The 59-residue stretch at 2–60 (RDGYIRRKDEFKFKCYVDGKDCDDVCKSEGGSAGYCTALGFLCYCAGLPDDKAWKPTSS) folds into the LCN-type CS-alpha/beta domain. Cystine bridges form between Cys-16/Cys-37, Cys-23/Cys-44, and Cys-27/Cys-46.

This sequence belongs to the long (4 C-C) scorpion toxin superfamily. Sodium channel inhibitor family. Beta subfamily. Expressed by the venom gland.

The protein localises to the secreted. Its function is as follows. Depressant insect toxins cause a transient contraction paralysis followed by a slow flaccid paralysis. They bind voltage-independently to sodium channels (Nav) and block action potentials, primarily by depolarizing the axonal membrane and suppressing the sodium current. This Androctonus crassicauda (Arabian fat-tailed scorpion) protein is Putative insect toxin Acra6.